Consider the following 492-residue polypeptide: GPI alpha-1,6-mannosyltransferase 2 (492 aa).

Residues 1–13 (MGLLDPSQKEVLK) lie on the Cytoplasmic side of the membrane. The helical transmembrane segment at 14 to 34 (FAVSCRILTLVLQALFNIIIP) threads the bilayer. At 35–77 (DHHADAFSPPRLAPSGSVDQLVEALLGGLSRWDAEHFLFIAEH) the chain is on the lumenal side. The chain crosses the membrane as a helical span at residues 78–98 (GYLYEHNFAFFPGFPLALLMG). The Cytoplasmic portion of the chain corresponds to 99–113 (TELLRPLQGLLSERS). Residues 114–134 (CLLVSVALLNSLFSVLAAVAL) form a helical membrane-spanning segment. Residues 135–136 (HD) lie on the Lumenal side of the membrane. Residues 137–157 (LGCLVLHCPRQAFCAALLFCL) form a helical membrane-spanning segment. The Cytoplasmic portion of the chain corresponds to 158–161 (SPAN). The chain crosses the membrane as a helical span at residues 162-182 (VFLAAGYSEALFAFLTFSAMG). Over 183–192 (QLERGRGWAS) the chain is Lumenal. A helical membrane pass occupies residues 193–213 (GLLFALAAGVRSNGLVSVGFL). At 214-234 (LHSQCRGFCSSLVVLDPLKGL) the chain is on the cytoplasmic side. The helical transmembrane segment at 235 to 255 (VKLMASLCLSVLTVSLPFALF) threads the bilayer. Over 256-327 (QYYAYTQFCF…RYYELRQVPN (72 aa)) the chain is Lumenal. Residues 328–348 (FLLATPVTVLVVWATWTYVTA) traverse the membrane as a helical segment. Residues 349 to 378 (HPWLCLTLGLQRTKDRESLEKPHPGFLSAK) are Cytoplasmic-facing. The helical transmembrane segment at 379-399 (VFVYLVHAAALLAFGGLCMHV) threads the bilayer. At 400-468 (QVLTRLLGSS…NWKTCSPVTK (69 aa)) the chain is on the lumenal side. The chain crosses the membrane as a helical span at residues 469 to 489 (CILVYFLTYWLLGLIMHCNFL). Residues 490–492 (PWT) are Cytoplasmic-facing.

It belongs to the PIGV family. Not N-glycosylated.

The protein resides in the endoplasmic reticulum membrane. The protein operates within glycolipid biosynthesis; glycosylphosphatidylinositol-anchor biosynthesis. In terms of biological role, alpha-1,6-mannosyltransferase that catalyzes the transfer of the second mannose, via an alpha-1,6 bond, from a dolichol-phosphate-mannose (Dol-P-Man) to the alpha-D-Man-(1-&gt;4)-alpha-D-GlcN-(1-&gt;6)-(1-radyl,2-acyl-sn-glycero-3-phospho)-2-acyl-inositol (also termed H2) intermediate to generate an alpha-D-Man-(1-&gt;6)-alpha-D-Man-(1-&gt;4)-alpha-D-GlcN-(1-&gt;6)-(1-radyl,2-acyl-sn-glycero-3-phospho)-2-acyl-inositol (also termed H3) and participates in the seventh step of the glycosylphosphatidylinositol-anchor biosynthesis. Also transfers the second mannose on a 2-PEtn-alpha-D-Man-(1-&gt;4)-alpha-D-GlcN-(1-&gt;6)-(1-radyl,2-acyl-sn-glycero-3-phospho)-2-acyl-inositol (also termed H5). The polypeptide is GPI alpha-1,6-mannosyltransferase 2 (Rattus norvegicus (Rat)).